Consider the following 275-residue polypeptide: Tryptophan synthase alpha chain (275 aa).

Catalysis depends on proton acceptor residues glutamate 51 and aspartate 62.

The protein belongs to the TrpA family. In terms of assembly, tetramer of two alpha and two beta chains.

It catalyses the reaction (1S,2R)-1-C-(indol-3-yl)glycerol 3-phosphate + L-serine = D-glyceraldehyde 3-phosphate + L-tryptophan + H2O. Its pathway is amino-acid biosynthesis; L-tryptophan biosynthesis; L-tryptophan from chorismate: step 5/5. Functionally, the alpha subunit is responsible for the aldol cleavage of indoleglycerol phosphate to indole and glyceraldehyde 3-phosphate. The sequence is that of Tryptophan synthase alpha chain from Methanopyrus kandleri (strain AV19 / DSM 6324 / JCM 9639 / NBRC 100938).